Consider the following 1347-residue polypeptide: Protein HUA2-LIKE 3 (1347 aa).

The PWWP domain occupies 24-81; the sequence is VGDLVLAKVKGFPAWPAVVDEPEKWGHSADSKKVTVHFFGTQQIAFCNHGDVESFTEE. Disordered stretches follow at residues 110 to 137, 251 to 320, and 383 to 402; these read KLKQ…TSQL, DGGP…SGSK, and DSCQ…PCEE. Over residues 127–137 the composition is skewed to polar residues; the sequence is TAGSSGNTSQL. The segment covering 302-314 has biased composition (low complexity); the sequence is VESNNNSRNEGNG. Residues 390–402 are compositionally biased toward basic and acidic residues; the sequence is NSHERLNERPCEE. In terms of domain architecture, CID spans 845-986; sequence DVQCTVESFE…HHIRELDSLS (142 aa). Disordered stretches follow at residues 1037–1069, 1121–1140, 1147–1223, and 1259–1347; these read RDED…VTPS, TSHQ…QNAQ, YSNG…YSYM, and RMRP…WHQR. Residues 1038–1049 are compositionally biased toward acidic residues; the sequence is DEDEGSDSDGGD. Positions 1054 to 1069 are enriched in basic and acidic residues; the sequence is TPEHESRSLEEHVTPS. Residues 1181 to 1191 are compositionally biased toward polar residues; the sequence is PSYSSRVSLSK. Residues 1208-1217 show a composition bias toward pro residues; sequence SSHPPPPPPS. Residues 1259–1272 are compositionally biased toward basic and acidic residues; sequence RMRPEPCENRDNWR.

As to expression, expressed throughout young primordia, and vegetative and reproductive apices.

The protein resides in the nucleus. Its function is as follows. Probable transcription factor that acts with partial redundancy with HULK1 and HULK2. Plays diverse and essential roles in the control of plant development, physiology and flowering time. In Arabidopsis thaliana (Mouse-ear cress), this protein is Protein HUA2-LIKE 3.